The sequence spans 93 residues: Cell division topological specificity factor (93 aa).

The protein belongs to the MinE family.

Prevents the cell division inhibition by proteins MinC and MinD at internal division sites while permitting inhibition at polar sites. This ensures cell division at the proper site by restricting the formation of a division septum at the midpoint of the long axis of the cell. In Methylococcus capsulatus (strain ATCC 33009 / NCIMB 11132 / Bath), this protein is Cell division topological specificity factor.